A 414-amino-acid polypeptide reads, in one-letter code: S-adenosylmethionine synthase (414 aa).

H11 is an ATP binding site. D13 provides a ligand contact to Mg(2+). Residue E39 participates in K(+) binding. The L-methionine site is built by E52 and Q95. The segment at Q95–L105 is flexible loop. Residues D169–K171, K245–F246, D254, R260–K261, A277, and K281 each bind ATP. Position 254 (D254) interacts with L-methionine. K285 is a binding site for L-methionine.

This sequence belongs to the AdoMet synthase family. In terms of assembly, homotetramer; dimer of dimers. Mg(2+) serves as cofactor. It depends on K(+) as a cofactor.

It is found in the cytoplasm. The catalysed reaction is L-methionine + ATP + H2O = S-adenosyl-L-methionine + phosphate + diphosphate. Its pathway is amino-acid biosynthesis; S-adenosyl-L-methionine biosynthesis; S-adenosyl-L-methionine from L-methionine: step 1/1. Functionally, catalyzes the formation of S-adenosylmethionine (AdoMet) from methionine and ATP. The overall synthetic reaction is composed of two sequential steps, AdoMet formation and the subsequent tripolyphosphate hydrolysis which occurs prior to release of AdoMet from the enzyme. In Synechococcus sp. (strain JA-3-3Ab) (Cyanobacteria bacterium Yellowstone A-Prime), this protein is S-adenosylmethionine synthase.